A 426-amino-acid chain; its full sequence is Pregnancy-specific beta-1-glycoprotein 9 (426 aa).

An N-terminal signal peptide occupies residues 1 to 34 (MGPLPAPSCTQRITWKGLLLTASLLNFWNPPTTA). One can recognise an Ig-like V-type domain in the interval 35-144 (EVTIEAQPPK…IRHFTFTLYL (110 aa)). N-linked (GlcNAc...) asparagine glycans are attached at residues Asn104 and Asn111. The short motif at 127 to 129 (RGD) is the Cell attachment site element. Ig-like C2-type domains lie at 147–234 (PKPY…VTLN), 242–326 (PYIT…PVIL), and 335–410 (PRIY…KSMT). 3 disulfide bridges follow: Cys169/Cys217, Cys262/Cys310, and Cys354/Cys394. Asn199, Asn268, Asn303, and Asn387 each carry an N-linked (GlcNAc...) asparagine glycan.

The protein belongs to the immunoglobulin superfamily. CEA family. Interacts with latency-associated peptide; leading to TGFB1 activation.

It localises to the secreted. In terms of biological role, binds to the small latent transforming growth factor-beta complex, consisting of the N-terminal TGFB1 latency-associated peptide (LAP) and the mature form of TGFB1, thereby leading to the activation of TGFB1. The activation of TGFB1 leads to stimulation of naive CD4(+) T-cells to increase FoxP3 expression and to an increase in the number of FoxP3(+) regulatory T-cells. Induces the differentiation of a suppressive CD4(+)LAP(+)FoxP3(-) T-cell subset. Induces the secretion of TGFB1 in macrophages, but not in activated CD4(+) T-cells. May reduce the expression of several pro-inflammatory cytokines and chemokines by CD4(+) T-cells, including IL2 and IL6. In Homo sapiens (Human), this protein is Pregnancy-specific beta-1-glycoprotein 9 (PSG9).